The primary structure comprises 219 residues: Pyridoxine/pyridoxamine 5'-phosphate oxidase (219 aa).

Residues 1 to 23 (MTSSVIPPSPSAADYAAEGDRPL) form a disordered region. FMN-binding positions include 66 to 71 (RIVLLK), 81 to 82 (FT), K88, and Q110. K71 is a binding site for substrate. 3 residues coordinate substrate: Y128, R132, and S136. FMN contacts are provided by residues 145–146 (QS) and W191. 197-199 (RMH) contacts substrate. Residue R201 participates in FMN binding.

It belongs to the pyridoxamine 5'-phosphate oxidase family. In terms of assembly, homodimer. FMN serves as cofactor.

It carries out the reaction pyridoxamine 5'-phosphate + O2 + H2O = pyridoxal 5'-phosphate + H2O2 + NH4(+). The enzyme catalyses pyridoxine 5'-phosphate + O2 = pyridoxal 5'-phosphate + H2O2. It participates in cofactor metabolism; pyridoxal 5'-phosphate salvage; pyridoxal 5'-phosphate from pyridoxamine 5'-phosphate: step 1/1. The protein operates within cofactor metabolism; pyridoxal 5'-phosphate salvage; pyridoxal 5'-phosphate from pyridoxine 5'-phosphate: step 1/1. In terms of biological role, catalyzes the oxidation of either pyridoxine 5'-phosphate (PNP) or pyridoxamine 5'-phosphate (PMP) into pyridoxal 5'-phosphate (PLP). This Hyphomonas neptunium (strain ATCC 15444) protein is Pyridoxine/pyridoxamine 5'-phosphate oxidase.